A 322-amino-acid polypeptide reads, in one-letter code: (12E)-labda-8(17),12,14-triene synthase (322 aa).

Residues 1 to 11 are compositionally biased toward polar residues; sequence MNDATRTSTTP. Residues 1-26 are disordered; sequence MNDATRTSTTPPALPMPDLRDSFPGP. Residues Asp-93 and Glu-98 each contribute to the Mg(2+) site. The DDXXXE motif signature appears at 93 to 98; sequence DDAHGE. Arg-188 contacts substrate. Residues Asn-234 and Ser-238 each contribute to the Mg(2+) site. Residues 234-242 carry the NXXXSXXXE motif motif; that stretch reads NDLASYAKE. Lys-241 is a binding site for substrate. Glu-242 serves as a coordination point for Mg(2+). A substrate-binding site is contributed by 319–320; that stretch reads RY.

Belongs to the terpene synthase family. It depends on Mg(2+) as a cofactor.

It catalyses the reaction (+)-copalyl diphosphate = (12E)-labda-8(17),12,14-triene + diphosphate. Involved in the biosynthesis of the labdane-type bicyclic diterpene labda-8(17),12(E),14-triene. Catalyzes the conversion of (+)-copalyl diphosphate to yield labda-8(17),12(E),14-triene. This Streptomyces anulatus (Streptomyces chrysomallus) protein is (12E)-labda-8(17),12,14-triene synthase.